The chain runs to 187 residues: MGIDLIAGGKSKKTKRTAPKSDDVYLKLLVKLYRFLVRRSNSNFNAVILKRLFMSKVNKAPLSLSRLVEFMTGKDDKIAVLVGTITDDLRVHEIPAMKVTALRFTERARARIEKAGGECLTFDQLALRAPLGQNTVLLRGPKNSREAVKHFGPAPGVPHSNTKPYVRHKGRKFEKARGKRKSRGFKV.

A disordered region spans residues 150 to 187 (HFGPAPGVPHSNTKPYVRHKGRKFEKARGKRKSRGFKV). Residues 165–187 (YVRHKGRKFEKARGKRKSRGFKV) are compositionally biased toward basic residues.

The protein belongs to the eukaryotic ribosomal protein eL18 family.

The protein is Large ribosomal subunit protein eL18x (RPL18C) of Arabidopsis thaliana (Mouse-ear cress).